The following is a 538-amino-acid chain: Diacylglycerol O-acyltransferase 1-1 (538 aa).

Disordered regions lie at residues 1 to 39 and 54 to 106; these read MVGS…GAIV and AAAA…GGGR. The segment covering 69–83 has biased composition (low complexity); the sequence is EAASGEPSSSSSSSP. The next 7 helical transmembrane spans lie at 136 to 156, 186 to 206, 218 to 238, 245 to 265, 293 to 313, 326 to 346, and 382 to 402; these read AIFK…LVAV, WPLL…FAVE, VATC…VLVI, VLSG…LVSF, NLQP…TLCY, GWLI…GFII, and LWLC…AEIL. The FYXDWWN motif signature appears at 409–415; the sequence is FYKDWWN. Helical transmembrane passes span 451–471, 474–494, and 505–525; these read VAVL…VAVP, ILKF…VLTA, and VGNM…CLLL. The active site involves His-464.

The protein belongs to the membrane-bound acyltransferase family. Sterol o-acyltransferase subfamily.

The protein localises to the endoplasmic reticulum membrane. The enzyme catalyses an acyl-CoA + a 1,2-diacyl-sn-glycerol = a triacyl-sn-glycerol + CoA. It functions in the pathway glycerolipid metabolism; triacylglycerol biosynthesis. Involved in triacylglycerol (TAG) synthesis. Catalyzes the acylation of the sn-3 hydroxy group of sn-1,2-diacylglycerol using acyl-CoA. The chain is Diacylglycerol O-acyltransferase 1-1 from Oryza sativa subsp. japonica (Rice).